The primary structure comprises 289 residues: Glycine--tRNA ligase alpha subunit (289 aa).

It belongs to the class-II aminoacyl-tRNA synthetase family. In terms of assembly, tetramer of two alpha and two beta subunits.

It is found in the cytoplasm. It carries out the reaction tRNA(Gly) + glycine + ATP = glycyl-tRNA(Gly) + AMP + diphosphate. In Nitratidesulfovibrio vulgaris (strain ATCC 29579 / DSM 644 / CCUG 34227 / NCIMB 8303 / VKM B-1760 / Hildenborough) (Desulfovibrio vulgaris), this protein is Glycine--tRNA ligase alpha subunit.